The chain runs to 925 residues: Nuclear factor of activated T-cells, cytoplasmic 2 (925 aa).

The segment at 1–95 (MNAPERQPQP…FGEPDRVGPQ (95 aa)) is disordered. Ser23 is modified (phosphoserine). The 9aaTAD motif lies at 26 to 34 (DELDFSILF). A phosphoserine mark is found at Ser99, Ser107, and Ser110. A calcineurin-binding region spans residues 111–116 (PRIEIT). A transactivation domain A (TAD-A) region spans residues 119-199 (HELIQAVGPL…CVSPNNGGPD (81 aa)). Phosphoserine occurs at positions 148, 168, 171, 172, 174, 175, 177, and 180. Residues 161-175 (YREPLCLSPASSGSS) are required for cytoplasmic retention of the phosphorylated form. Tandem repeats lie at residues 184-200 (SPYT…GPDD) and 213-229 (SPRT…LAED). Residues 184 to 286 (SPYTSPCVSP…PQPSSHVAPQ (103 aa)) are 3 X approximate SP repeats. Positions 195–297 (NGGPDDLCPQ…HGSPAGYPPV (103 aa)) are disordered. Residues Ser213, Ser217, Ser221, Ser236, and Ser243 each carry the phosphoserine modification. The segment covering 214-224 (PRTSPIMSPRT) has biased composition (polar residues). The Nuclear localization signal motif lies at 251 to 253 (KRR). 8 positions are modified to phosphoserine: Ser255, Ser268, Ser274, Ser276, Ser280, Ser326, Ser330, and Ser363. The segment covering 264–281 (PPGASPQRSRSPSPQPSS) has biased composition (low complexity). The stretch at 272 to 286 (SRSPSPQPSSHVAPQ) is one 3; approximate repeat. An RHD domain is found at 392–574 (ASLPPLEWPL…NPIECSQRSA (183 aa)). A DNA-binding region spans residues 421–428 (RAHYETEG). A Nuclear localization signal motif is present at residues 664-666 (KRK). A phosphoserine mark is found at Ser755, Ser757, Ser759, Ser856, and Ser859. The tract at residues 839-894 (PGTTRPGPPPVSQGQRLSPGSYPTVIQQQNATSQRAAKNGPPVSDQKEVLPAGVTI) is disordered. A compositionally biased stretch (polar residues) spans 862 to 874 (TVIQQQNATSQRA). Residues 904-913 (YLDDVNEIIR) carry the Nuclear export signal motif.

Member of the multicomponent NFATC transcription complex that consists of at least two components, a pre-existing cytoplasmic component NFATC2 and an inducible nuclear component NFATC1. Other members such as NFATC4, NFATC3 or members of the activating protein-1 family, MAF, GATA4 and Cbp/p300 can also bind the complex. The phosphorylated form specifically interacts with XPO1; which mediates nuclear export. NFATC proteins bind to DNA as monomers. Interacts with NFATC2IP. Interacts with FOXP3. Interacts with TBX21 ('Thr-303' phosphorylated form). Interacts with KAT2A. Interacts with HOMER2 and HOMER3; this interaction competes with calcineurin/PPP3CA-binding and hence prevents NFATC2 dephosphorylation and activation. Interacts with protein phosphatase PPP3CA/calcineurin A. Interacts with AKAP5 (via leucine zipper domain); this is required for NFATC2/NFAT1 recruitment to CRAC channels. In terms of processing, in resting cells, phosphorylated by NFATC-kinase on at least 18 sites in the 99-363 region. Upon cell stimulation, all these sites except Ser-243 are dephosphorylated by calcineurin. Dephosphorylation induces a conformational change that simultaneously exposes an NLS and masks an NES, which results in nuclear localization. Simultaneously, Ser-53 or Ser-56 is phosphorylated; which is required for full transcriptional activity. Ubiquitinated in endothelial cells by RNF213 downstream of the non-canonical Wnt signaling pathway, leading to its degradation by the proteasome. Expressed in thymus, spleen, heart, testis, brain, placenta, muscle and pancreas. Isoform 1 is highly expressed in the small intestine, heart, testis, prostate, thymus, placenta and thyroid. Isoform 3 is highly expressed in stomach, uterus, placenta, trachea and thyroid.

It localises to the cytoplasm. It is found in the nucleus. Its function is as follows. Plays a role in the inducible expression of cytokine genes in T-cells, especially in the induction of the IL-2, IL-3, IL-4, TNF-alpha or GM-CSF. Promotes invasive migration through the activation of GPC6 expression and WNT5A signaling pathway. Is involved in the negative regulation of chondrogenesis. Recruited by AKAP5 to ORAI1 pore-forming subunit of CRAC channels in Ca(2+) signaling microdomains where store-operated Ca(2+) influx is coupled to calmodulin and calcineurin signaling and activation of NFAT-dependent transcriptional responses. In Homo sapiens (Human), this protein is Nuclear factor of activated T-cells, cytoplasmic 2 (NFATC2).